We begin with the raw amino-acid sequence, 60 residues long: Prophage outer membrane lipoprotein RzoD (60 aa).

The signal sequence occupies residues 1 to 19; it reads MRKLKMMLCVMMLPLVVVG. Residue cysteine 20 is the site of N-palmitoyl cysteine attachment. Residue cysteine 20 is the site of S-diacylglycerol cysteine attachment.

This sequence belongs to the lambdalikevirus o-spanin family. Homodimer; disulfide-linked. Interacts (via C-terminus) with RZ (via C-terminus). Part of the spanin complex which spans the entire periplasmic space. The spanin complex is composed of spanin, inner membrane subunit and spanin, outer membrane subunit.

Its subcellular location is the cell outer membrane. Component of the spanin complex that disrupts the outer membrane and causes cell lysis during virus exit. The spanin complex conducts the final step in cell lysis by disrupting the outer membrane after holin and endolysin action have permeabilized the inner membrane and degraded the host peptidoglycans. The protein is Prophage outer membrane lipoprotein RzoD (rzoD) of Escherichia coli (strain K12).